A 169-amino-acid polypeptide reads, in one-letter code: NAD(P)H-quinone oxidoreductase subunit 6, chloroplastic (169 aa).

Transmembrane regions (helical) follow at residues 7 to 27, 29 to 49, 58 to 78, 90 to 110, and 139 to 159; these read FSSAALTTGILLGCLGVIFLP, IVYAAFLLGAVFFCLAGIYVL, AQVLVYVGAINVLILFAIMLV, SPPLIPGIACIGLLGVLVQMI, and LLAFEVMSLVLLVALVGAIVL.

The protein belongs to the complex I subunit 6 family. NDH is composed of at least 16 different subunits, 5 of which are encoded in the nucleus.

The protein localises to the plastid. Its subcellular location is the chloroplast thylakoid membrane. The catalysed reaction is a plastoquinone + NADH + (n+1) H(+)(in) = a plastoquinol + NAD(+) + n H(+)(out). It carries out the reaction a plastoquinone + NADPH + (n+1) H(+)(in) = a plastoquinol + NADP(+) + n H(+)(out). Functionally, NDH shuttles electrons from NAD(P)H:plastoquinone, via FMN and iron-sulfur (Fe-S) centers, to quinones in the photosynthetic chain and possibly in a chloroplast respiratory chain. The immediate electron acceptor for the enzyme in this species is believed to be plastoquinone. Couples the redox reaction to proton translocation, and thus conserves the redox energy in a proton gradient. The chain is NAD(P)H-quinone oxidoreductase subunit 6, chloroplastic (ndhG) from Nephroselmis olivacea (Green alga).